The following is a 133-amino-acid chain: Glycine cleavage system H protein (133 aa).

In terms of domain architecture, Lipoyl-binding spans 30 to 112 (TITVGITHHA…YGAGWFFKIK (83 aa)). K71 carries the N6-lipoyllysine modification.

Belongs to the GcvH family. In terms of assembly, the glycine cleavage system is composed of four proteins: P, T, L and H. The cofactor is (R)-lipoate.

The glycine cleavage system catalyzes the degradation of glycine. The H protein shuttles the methylamine group of glycine from the P protein to the T protein. The sequence is that of Glycine cleavage system H protein from Neisseria gonorrhoeae (strain ATCC 700825 / FA 1090).